Consider the following 521-residue polypeptide: C-22 sterol desaturase erg5 (521 aa).

The chain crosses the membrane as a helical span at residues 30-50 (AVLNGFTFWKALATLFFAAVI).

It belongs to the cytochrome P450 family. It depends on heme as a cofactor.

It localises to the endoplasmic reticulum membrane. It catalyses the reaction 5-dehydroepisterol + NADPH + O2 + H(+) = ergosta-5,7,22,24(28)-tetraen-3beta-ol + NADP(+) + 2 H2O. Its pathway is steroid metabolism; ergosterol biosynthesis. In terms of biological role, C-22 sterol desaturase; part of the third module of ergosterol biosynthesis pathway that includes the late steps of the pathway. Erg5 converts 5-dehydroepisterol into ergosta-5,7,22,24(28)-tetraen-3beta-ol by forming the C-22(23) double bond in the sterol side chain. The third module or late pathway involves the ergosterol synthesis itself through consecutive reactions that mainly occur in the endoplasmic reticulum (ER) membrane. Firstly, the squalene synthase erg9 catalyzes the condensation of 2 farnesyl pyrophosphate moieties to form squalene, which is the precursor of all steroids. Squalene synthase is crucial for balancing the incorporation of farnesyl diphosphate (FPP) into sterol and nonsterol isoprene synthesis. Secondly, squalene is converted into lanosterol by the consecutive action of the squalene epoxidase erg1 and the lanosterol synthase erg7. Then, the delta(24)-sterol C-methyltransferase erg6 methylates lanosterol at C-24 to produce eburicol. Eburicol is the substrate of the sterol 14-alpha demethylase encoded by cyp51A and cyp51B, to yield 4,4,24-trimethyl ergosta-8,14,24(28)-trienol. The C-14 reductase erg24 then reduces the C14=C15 double bond which leads to 4,4-dimethylfecosterol. A sequence of further demethylations at C-4, involving the C-4 demethylation complex containing the C-4 methylsterol oxidases erg25A or erg25B, the sterol-4-alpha-carboxylate 3-dehydrogenase erg26 and the 3-keto-steroid reductase erg27, leads to the production of fecosterol via 4-methylfecosterol. The C-8 sterol isomerase erg2 then catalyzes the reaction which results in unsaturation at C-7 in the B ring of sterols and thus converts fecosterol to episterol. The sterol-C5-desaturase erg3B then catalyzes the introduction of a C-5 double bond in the B ring to produce 5-dehydroepisterol. The 2 other sterol-C5-desaturases, erg3A and erg3C, seem to be less important in ergosterol biosynthesis. The C-22 sterol desaturase erg5 further converts 5-dehydroepisterol into ergosta-5,7,22,24(28)-tetraen-3beta-ol by forming the C-22(23) double bond in the sterol side chain. Finally, ergosta-5,7,22,24(28)-tetraen-3beta-ol is substrate of the C-24(28) sterol reductases erg4A and erg4B to produce ergosterol. Possible alternative sterol biosynthetic pathways might exist from fecosterol to ergosterol, depending on the activities of the erg3 isoforms. In Aspergillus fumigatus (strain ATCC MYA-4609 / CBS 101355 / FGSC A1100 / Af293) (Neosartorya fumigata), this protein is C-22 sterol desaturase erg5.